The chain runs to 144 residues: Giant hemoglobins B chain (144 aa).

The Globin domain occupies 3–144 (VCGPLQRLKV…LNVITNGIQG (142 aa)). Residue His-96 coordinates heme b.

This sequence belongs to the globin family. In terms of assembly, part of giant hemoglobin C1, V1 and V2. This worm has three different extracellular Hbs: two dissolved in the vascular blood, V1 (CA. 3,500 kDa) and V2 (CA. 400 kDa), and one in the coelomic fluid, C1 (CA. 400 kDa). V1 consists of four heme-containing, globin chains (B-E) and four linker chains (L1-L4). V2 consists of six globin chains (A-F) and C1 consists of five globin chains (A-E).

Its subcellular location is the secreted. It is found in the extracellular space. This Riftia pachyptila (Vent tube worm) protein is Giant hemoglobins B chain.